Consider the following 308-residue polypeptide: MNHFLDIHLTDPADLREIIDQAAIMKSARKGRPRGAPDDTQPLKDRIVALIFEKPSTRTRVSFDVGVRQMGGQTMVLSGADMQLGHGETIADTARVLSRYVDLIMIRTFDEAVLTEMAEFATVPVINGLTDRTHPCQIMADILTFEEHRGPIAGKKVVWSGDGNNVCASFLHAAGQFGFDLTFTGPQTLDPDAEFVELARSKGVNVAVERDPAKAVEGADLVVTDTWVSMHDAQSARERRHNQLRPYRVDAALMSRAKPEALFMHCLPAHRDDEATSEVMDGPQSVIFDEAENRLHAQKAIMRWCLAV.

Carbamoyl phosphate contacts are provided by residues 56 to 59, glutamine 83, arginine 107, and 134 to 137; these read STRT and HPCQ. L-ornithine contacts are provided by residues asparagine 165, aspartate 225, and 229-230; that span reads SM. Residues 266–267 and arginine 294 contribute to the carbamoyl phosphate site; that span reads CL.

The protein belongs to the aspartate/ornithine carbamoyltransferase superfamily. OTCase family.

Its subcellular location is the cytoplasm. It carries out the reaction carbamoyl phosphate + L-ornithine = L-citrulline + phosphate + H(+). Its pathway is amino-acid biosynthesis; L-arginine biosynthesis; L-arginine from L-ornithine and carbamoyl phosphate: step 1/3. Functionally, reversibly catalyzes the transfer of the carbamoyl group from carbamoyl phosphate (CP) to the N(epsilon) atom of ornithine (ORN) to produce L-citrulline. This is Ornithine carbamoyltransferase from Roseobacter denitrificans (strain ATCC 33942 / OCh 114) (Erythrobacter sp. (strain OCh 114)).